A 923-amino-acid polypeptide reads, in one-letter code: Neuropilin-1 (923 aa).

The first 21 residues, 1–21, serve as a signal peptide directing secretion; sequence MERGLPLLCAVLALVLAPAGA. Residues 22–856 lie on the Extracellular side of the membrane; it reads FRNDKCGDTI…PGNVLKTLDP (835 aa). 3 disulfides stabilise this stretch: Cys27–Cys54, Cys82–Cys104, and Cys147–Cys173. CUB domains follow at residues 27-141 and 147-265; these read CGDT…YEIF and CSQN…YSVL. Residue Asn150 is glycosylated (N-linked (GlcNAc...) asparagine). Residues Glu195, Asp209, and Asp250 each contribute to the Ca(2+) site. An intrachain disulfide couples Cys206 to Cys228. N-linked (GlcNAc...) asparagine glycosylation is found at Asn261, Asn300, and Asn522. Cystine bridges form between Cys275–Cys424 and Cys431–Cys583. 2 consecutive F5/8 type C domains span residues 275–424 and 431–583; these read CMEA…VYGC and CSGM…LLGC. The O-linked (Xyl...) (chondroitin sulfate) serine; alternate glycan is linked to Ser612. Ser612 carries an O-linked (Xyl...) (heparan sulfate) serine; alternate glycan. The region spanning 645-811 is the MAM domain; the sequence is TYGFNCEFGW…NHISQEDCAK (167 aa). A disordered region spans residues 820–845; sequence PEIKIDETGSTPGYEGEGEGDKNISR. Ser829 carries an O-linked (Xyl...) (chondroitin sulfate) serine glycan. Asn842 carries N-linked (GlcNAc...) asparagine glycosylation. Residues 857 to 879 traverse the membrane as a helical segment; the sequence is ILITIIAMSALGVLLGAVCGVVL. At 880–923 the chain is on the cytoplasmic side; sequence YCACWHNGMSERNLSALENYNFELVDGVKLKKDKLNTQSTYSEA. At Ser894 the chain carries Phosphoserine.

It belongs to the neuropilin family. As to quaternary structure, homodimer, and heterodimer with NRP2. Interacts with FER. Interacts with PLXNB1. Interacts with VEGFA. Interacts with ABCB8/MITOSUR in mitochondria. In terms of assembly, (Microbial infection) Interacts with SARS coronavirus-2/SARS-CoV-2 spike protein S1 (via the CendR motif RRAR). As to expression, the expression of isoforms 1 and 2 does not seem to overlap. Expressed in olfactory epithelium (at protein level). Expressed in fibroblasts (at protein level). Expressed by the blood vessels of different tissues. In the developing embryo it is found predominantly in the nervous system. In adult tissues, it is highly expressed in heart and placenta; moderately in lung, liver, skeletal muscle, kidney and pancreas; and low in adult brain. Expressed in the central nervous system, including olfactory related regions such as the olfactory tubercles and paraolfactory gyri. The expression of isoforms 1 and 2 does not seem to overlap. Found in liver hepatocytes, kidney distal and proximal tubules.

It localises to the secreted. The protein localises to the mitochondrion membrane. It is found in the cell membrane. The protein resides in the cytoplasm. Cell-surface receptor involved in the development of the cardiovascular system, in angiogenesis, in the formation of certain neuronal circuits and in organogenesis outside the nervous system. Mediates the chemorepulsant activity of semaphorins. Recognizes a C-end rule (CendR) motif R/KXXR/K on its ligands which causes cellular internalization and vascular leakage. It binds to semaphorin 3A, the PLGF-2 isoform of PGF, the VEGF165 isoform of VEGFA and VEGFB. Coexpression with KDR results in increased VEGF165 binding to KDR as well as increased chemotaxis. Regulates VEGF-induced angiogenesis. Binding to VEGFA initiates a signaling pathway needed for motor neuron axon guidance and cell body migration, including for the caudal migration of facial motor neurons from rhombomere 4 to rhombomere 6 during embryonic development. Regulates mitochondrial iron transport via interaction with ABCB8/MITOSUR. Functionally, (Microbial infection) Acts as a host factor for human coronavirus SARS-CoV-2 infection. Recognizes and binds to CendR motif RRAR on SARS-CoV-2 spike protein S1 which enhances SARS-CoV-2 infection. In terms of biological role, binds VEGF-165 and may inhibit its binding to cells. May induce apoptosis by sequestering VEGF-165. May bind as well various members of the semaphorin family. Its expression has an averse effect on blood vessel number and integrity. In Homo sapiens (Human), this protein is Neuropilin-1.